A 223-amino-acid polypeptide reads, in one-letter code: Small ribosomal subunit protein uS3 (223 aa).

A KH type-2 domain is found at 39–107 (VREFLHKKLA…PVQINIEEVR (69 aa)).

Belongs to the universal ribosomal protein uS3 family. Part of the 30S ribosomal subunit. Forms a tight complex with proteins S10 and S14.

Binds the lower part of the 30S subunit head. Binds mRNA in the 70S ribosome, positioning it for translation. The chain is Small ribosomal subunit protein uS3 from Francisella tularensis subsp. novicida (strain U112).